A 315-amino-acid polypeptide reads, in one-letter code: Ribose-phosphate pyrophosphokinase (315 aa).

ATP-binding positions include 37-39 (DGE) and 96-97 (RQ). His131 and Asp170 together coordinate Mg(2+). The active site involves Lys194. Residues Arg196, Asp220, and 224-228 (DTGGT) each bind D-ribose 5-phosphate.

This sequence belongs to the ribose-phosphate pyrophosphokinase family. Class I subfamily. In terms of assembly, homohexamer. Mg(2+) is required as a cofactor.

It is found in the cytoplasm. It carries out the reaction D-ribose 5-phosphate + ATP = 5-phospho-alpha-D-ribose 1-diphosphate + AMP + H(+). Its pathway is metabolic intermediate biosynthesis; 5-phospho-alpha-D-ribose 1-diphosphate biosynthesis; 5-phospho-alpha-D-ribose 1-diphosphate from D-ribose 5-phosphate (route I): step 1/1. In terms of biological role, involved in the biosynthesis of the central metabolite phospho-alpha-D-ribosyl-1-pyrophosphate (PRPP) via the transfer of pyrophosphoryl group from ATP to 1-hydroxyl of ribose-5-phosphate (Rib-5-P). This is Ribose-phosphate pyrophosphokinase from Yersinia pestis.